We begin with the raw amino-acid sequence, 90 residues long: MRIESLLQHDVVERILERLAVNSLPRFKAVSKQWKSTIESQFFQGKHLTHRQQSGDPVVLMVTVYNDDSPHVGSLLLGSRRTRNPTTLII.

An F-box domain is found at Met-1–Lys-46.

This Arabidopsis thaliana (Mouse-ear cress) protein is Putative F-box protein At5g16285.